An 85-amino-acid chain; its full sequence is Large ribosomal subunit protein bL27 (85 aa).

The tract at residues 1–21 (MAHKKAAGSSRNGRDSESKRL) is disordered.

Belongs to the bacterial ribosomal protein bL27 family.

The protein is Large ribosomal subunit protein bL27 of Chromohalobacter salexigens (strain ATCC BAA-138 / DSM 3043 / CIP 106854 / NCIMB 13768 / 1H11).